The primary structure comprises 395 residues: S-adenosylmethionine synthase (395 aa).

His-16 serves as a coordination point for ATP. Residue Asp-18 participates in Mg(2+) binding. Glu-44 provides a ligand contact to K(+). L-methionine contacts are provided by Glu-57 and Gln-100. The flexible loop stretch occupies residues 100–110 (QSPDIAQGVDR). ATP is bound by residues 167–169 (DAK), 233–234 (RF), Asp-242, 248–249 (RK), Ala-265, and Lys-269. L-methionine is bound at residue Asp-242. Residue Lys-273 coordinates L-methionine.

It belongs to the AdoMet synthase family. Homotetramer; dimer of dimers. Mg(2+) serves as cofactor. The cofactor is K(+).

Its subcellular location is the cytoplasm. It catalyses the reaction L-methionine + ATP + H2O = S-adenosyl-L-methionine + phosphate + diphosphate. It functions in the pathway amino-acid biosynthesis; S-adenosyl-L-methionine biosynthesis; S-adenosyl-L-methionine from L-methionine: step 1/1. Catalyzes the formation of S-adenosylmethionine (AdoMet) from methionine and ATP. The overall synthetic reaction is composed of two sequential steps, AdoMet formation and the subsequent tripolyphosphate hydrolysis which occurs prior to release of AdoMet from the enzyme. This chain is S-adenosylmethionine synthase, found in Burkholderia cenocepacia (strain ATCC BAA-245 / DSM 16553 / LMG 16656 / NCTC 13227 / J2315 / CF5610) (Burkholderia cepacia (strain J2315)).